The chain runs to 803 residues: Translation initiation factor IF-2 (803 aa).

Disordered stretches follow at residues 95-125 and 138-178; these read PVVEQKRETEPAPTQEVPLTSDTTNLNEKAE and EVKE…EREE. Over residues 111 to 121 the composition is skewed to polar residues; the sequence is VPLTSDTTNLN. Residues 138–155 are compositionally biased toward basic and acidic residues; that stretch reads EVKEEAKKTPSEKKETPK. The segment covering 156–167 has biased composition (basic residues); that stretch reads KGPRKETRRSRK. Over residues 168–178 the composition is skewed to basic and acidic residues; the sequence is PDKEDKWEREE. Residues 302–471 form the tr-type G domain; sequence PRAPVVTIMG…LLQAEVLELK (170 aa). The tract at residues 311 to 318 is G1; sequence GHVDHGKT. 311–318 is a GTP binding site; the sequence is GHVDHGKT. Residues 336 to 340 are G2; it reads GITQH. Positions 357–360 are G3; sequence DTPG. GTP-binding positions include 357 to 361 and 411 to 414; these read DTPGH and NKID. Residues 411-414 are G4; it reads NKID. A G5 region spans residues 447 to 449; it reads SAK.

This sequence belongs to the TRAFAC class translation factor GTPase superfamily. Classic translation factor GTPase family. IF-2 subfamily.

The protein resides in the cytoplasm. One of the essential components for the initiation of protein synthesis. Protects formylmethionyl-tRNA from spontaneous hydrolysis and promotes its binding to the 30S ribosomal subunits. Also involved in the hydrolysis of GTP during the formation of the 70S ribosomal complex. The protein is Translation initiation factor IF-2 of Coxiella burnetii (strain CbuK_Q154) (Coxiella burnetii (strain Q154)).